Here is a 156-residue protein sequence, read N- to C-terminus: ATP synthase subunit b (156 aa).

Residues 7 to 27 (LFVQAIVFAILVWFTMKFVWP) form a helical membrane-spanning segment.

This sequence belongs to the ATPase B chain family. F-type ATPases have 2 components, F(1) - the catalytic core - and F(0) - the membrane proton channel. F(1) has five subunits: alpha(3), beta(3), gamma(1), delta(1), epsilon(1). F(0) has three main subunits: a(1), b(2) and c(10-14). The alpha and beta chains form an alternating ring which encloses part of the gamma chain. F(1) is attached to F(0) by a central stalk formed by the gamma and epsilon chains, while a peripheral stalk is formed by the delta and b chains.

It localises to the cell inner membrane. Functionally, f(1)F(0) ATP synthase produces ATP from ADP in the presence of a proton or sodium gradient. F-type ATPases consist of two structural domains, F(1) containing the extramembraneous catalytic core and F(0) containing the membrane proton channel, linked together by a central stalk and a peripheral stalk. During catalysis, ATP synthesis in the catalytic domain of F(1) is coupled via a rotary mechanism of the central stalk subunits to proton translocation. Its function is as follows. Component of the F(0) channel, it forms part of the peripheral stalk, linking F(1) to F(0). In Polaromonas sp. (strain JS666 / ATCC BAA-500), this protein is ATP synthase subunit b.